Consider the following 142-residue polypeptide: Cell division protein SepF (142 aa).

Residues 21–31 (ETTTVEEEREE) show a composition bias toward acidic residues. The segment at 21–46 (ETTTVEEEREEQESSHKRQPAISRTN) is disordered.

The protein belongs to the SepF family. Homodimer. Interacts with FtsZ.

Its subcellular location is the cytoplasm. In terms of biological role, cell division protein that is part of the divisome complex and is recruited early to the Z-ring. Probably stimulates Z-ring formation, perhaps through the cross-linking of FtsZ protofilaments. Its function overlaps with FtsA. This chain is Cell division protein SepF, found in Brevibacillus brevis (strain 47 / JCM 6285 / NBRC 100599).